Consider the following 451-residue polypeptide: Phosphoglucosamine mutase (451 aa).

The Phosphoserine intermediate role is filled by Ser102. Mg(2+) is bound by residues Ser102, Asp242, Asp244, and Asp246. Phosphoserine is present on Ser102.

Belongs to the phosphohexose mutase family. Mg(2+) serves as cofactor. In terms of processing, activated by phosphorylation.

The catalysed reaction is alpha-D-glucosamine 1-phosphate = D-glucosamine 6-phosphate. In terms of biological role, catalyzes the conversion of glucosamine-6-phosphate to glucosamine-1-phosphate. The sequence is that of Phosphoglucosamine mutase from Staphylococcus epidermidis (strain ATCC 35984 / DSM 28319 / BCRC 17069 / CCUG 31568 / BM 3577 / RP62A).